Consider the following 262-residue polypeptide: LOB domain-containing protein 18 (262 aa).

One can recognise an LOB domain in the interval 36–138 (GPCGACKFLR…AEVSYLQAHL (103 aa)). The interval 223–262 (VGLGGENSHDLQALAHELLHRQGSPPPAATDHSPSRTMSR) is disordered.

This sequence belongs to the LOB domain-containing protein family. In terms of assembly, homodimer and heterodimer with LBD16. Interacts with GIP1. Expressed in roots, stems, leaves and flowers. Expressed in vascular tissues of hypocotyls, leaves, roots, developing floral organs and siliques.

It is found in the nucleus. Its function is as follows. Involved in the positive regulation of tracheary element (TE) differentiation. Involved in a positive feedback loop that maintains or promotes NAC030/VND7 expression that regulates TE differentiation-related genes. Functions in the initiation and emergence of lateral roots, in conjunction with LBD16, downstream of ARF7 and ARF19. Transcriptional activator that directly regulates EXPA14, a gene encoding a cell wall-loosening factor that promotes lateral root emergence. Activates EXPA14 by directly binding to a specific region of its promoter. Transcriptional activator that directly regulates EXPA17, a gene encoding a cell wall-loosening factor that promotes lateral root emergence. Acts downstream of the auxin influx carriers AUX1 and LAX1 in the regulation of lateral root initiation and development. This Arabidopsis thaliana (Mouse-ear cress) protein is LOB domain-containing protein 18 (LBD18).